A 710-amino-acid chain; its full sequence is Bifunctional sesterterpene synthase (710 aa).

The interval 1–327 (MEFKFSAVVD…RYYTDASFSE (327 aa)) is stellata-2,6,19-trien synthase. Aspartate 92 and aspartate 96 together coordinate Mg(2+). Substrate-binding positions include aspartate 92, aspartate 96, 181-184 (RVHD), and 229-233 (SWDKE). The DDXXD motif 1 signature appears at 92-96 (DDVTD). An NSE motif motif is present at residues 278-286 (YLRVFEEVK). 318–319 (RY) contacts substrate. The segment at 328 to 709 (RQLEWMKNGI…LRLIFELLRN (382 aa)) is geranylgeranyl diphosphate synthase. The segment at 365–404 (HHAVTSNGTGTGSHDTLNGDGTAHENNSRDASIPGRTTNG) is disordered. The span at 368–380 (VTSNGTGTGSHDT) shows a compositional bias: polar residues. Isopentenyl diphosphate-binding residues include lysine 430, arginine 433, and histidine 462. Aspartate 469 and aspartate 473 together coordinate Mg(2+). Positions 469–473 (DDLED) match the DDXXD motif 2 motif. Dimethylallyl diphosphate is bound at residue arginine 478. Position 479 (arginine 479) interacts with isopentenyl diphosphate. 6 residues coordinate dimethylallyl diphosphate: lysine 556, threonine 557, glutamine 592, asparagine 599, lysine 609, and lysine 619.

In the C-terminal section; belongs to the FPP/GGPP synthase family. The protein in the N-terminal section; belongs to the terpene synthase family. Hexamer.

The enzyme catalyses 4 isopentenyl diphosphate + dimethylallyl diphosphate = (2E,6E,10E,14E)-geranylfarnesyl diphosphate + 4 diphosphate. It carries out the reaction (2E,6E,10E,14E)-geranylfarnesyl diphosphate = variecoladiene + diphosphate. It participates in secondary metabolite biosynthesis; terpenoid biosynthesis. Functionally, multifunctional sesterterpene synthase; part of the gene cluster that mediates the biosynthesis of the sesterterpene variecolin. The first step in the pathway is performed by the variecoladiene synthase vrcA that possesses both prenyl transferase and terpene cyclase activity, converting isopentenyl diphosphate and dimethylallyl diphosphate into geranylfarnesyl pyrophosphate (GFPP) and then converting GFPP into the tetracyclic variecoladiene. The cytochrome P450 monooxygenase vrcB then catalyzes multiple oxidations at C-5 and C-20 positions to yield variecolin. This chain is Bifunctional sesterterpene synthase, found in Aspergillus aculeatus (strain ATCC 16872 / CBS 172.66 / WB 5094).